Reading from the N-terminus, the 892-residue chain is DNA mismatch repair protein MutS (892 aa).

Residue 607–614 (GPNMSGKS) coordinates ATP.

The protein belongs to the DNA mismatch repair MutS family.

Its function is as follows. This protein is involved in the repair of mismatches in DNA. It is possible that it carries out the mismatch recognition step. This protein has a weak ATPase activity. The chain is DNA mismatch repair protein MutS from Bacillus cereus (strain G9842).